We begin with the raw amino-acid sequence, 273 residues long: 4-hydroxy-tetrahydrodipicolinate reductase (273 aa).

Position 12–17 (Gly12–Met17) interacts with NAD(+). Residue Arg39 coordinates NADP(+). NAD(+) contacts are provided by residues Gly102–Thr104 and Ala126–Phe129. Residue His159 is the Proton donor/acceptor of the active site. His160 lines the (S)-2,3,4,5-tetrahydrodipicolinate pocket. Lys163 acts as the Proton donor in catalysis. Gly169 to Thr170 lines the (S)-2,3,4,5-tetrahydrodipicolinate pocket.

This sequence belongs to the DapB family. As to quaternary structure, homotetramer.

It is found in the cytoplasm. It carries out the reaction (S)-2,3,4,5-tetrahydrodipicolinate + NAD(+) + H2O = (2S,4S)-4-hydroxy-2,3,4,5-tetrahydrodipicolinate + NADH + H(+). It catalyses the reaction (S)-2,3,4,5-tetrahydrodipicolinate + NADP(+) + H2O = (2S,4S)-4-hydroxy-2,3,4,5-tetrahydrodipicolinate + NADPH + H(+). Its pathway is amino-acid biosynthesis; L-lysine biosynthesis via DAP pathway; (S)-tetrahydrodipicolinate from L-aspartate: step 4/4. Functionally, catalyzes the conversion of 4-hydroxy-tetrahydrodipicolinate (HTPA) to tetrahydrodipicolinate. The polypeptide is 4-hydroxy-tetrahydrodipicolinate reductase (Sodalis glossinidius (strain morsitans)).